A 474-amino-acid chain; its full sequence is Aspartyl/glutamyl-tRNA(Asn/Gln) amidotransferase subunit B (474 aa).

The protein belongs to the GatB/GatE family. GatB subfamily. In terms of assembly, heterotrimer of A, B and C subunits.

It catalyses the reaction L-glutamyl-tRNA(Gln) + L-glutamine + ATP + H2O = L-glutaminyl-tRNA(Gln) + L-glutamate + ADP + phosphate + H(+). It carries out the reaction L-aspartyl-tRNA(Asn) + L-glutamine + ATP + H2O = L-asparaginyl-tRNA(Asn) + L-glutamate + ADP + phosphate + 2 H(+). Allows the formation of correctly charged Asn-tRNA(Asn) or Gln-tRNA(Gln) through the transamidation of misacylated Asp-tRNA(Asn) or Glu-tRNA(Gln) in organisms which lack either or both of asparaginyl-tRNA or glutaminyl-tRNA synthetases. The reaction takes place in the presence of glutamine and ATP through an activated phospho-Asp-tRNA(Asn) or phospho-Glu-tRNA(Gln). In Persephonella marina (strain DSM 14350 / EX-H1), this protein is Aspartyl/glutamyl-tRNA(Asn/Gln) amidotransferase subunit B.